A 414-amino-acid chain; its full sequence is UPF0754 membrane protein tlr2287 (414 aa).

The next 2 helical transmembrane spans lie at 2 to 22 and 386 to 406; these read ADISYWTLLVPPLAGGVIGYF and AIVRLGGILGFLIGVVQAGVL.

It belongs to the UPF0754 family.

It localises to the cell inner membrane. This Thermosynechococcus vestitus (strain NIES-2133 / IAM M-273 / BP-1) protein is UPF0754 membrane protein tlr2287.